Here is a 529-residue protein sequence, read N- to C-terminus: BAR/IMD domain-containing adapter protein 2-like 2 (529 aa).

The IMD domain occupies 1–239 (MAPEMDQFYR…HSPGLLGPVL (239 aa)). Disordered regions lie at residues 221 to 332 (EASR…GGAR) and 399 to 529 (NPLN…PLIR). Phosphoserine is present on residues Ser-231, Ser-272, and Ser-304. Residues 301 to 317 (SASSLYSSSTQRSRSNS) are compositionally biased toward low complexity. Gly residues predominate over residues 321–331 (RPGGGGGGGGA). Positions 329–392 (GGARRVRALV…PEAYVKPLDE (64 aa)) constitute an SH3 domain. Positions 439 to 459 (GNSTASSDYWDGQSRSRTPSH) are enriched in polar residues. The segment covering 473-484 (PSSRRSSMGSMG) has biased composition (low complexity). Phosphoserine is present on residues Ser-479 and Ser-482.

Its subcellular location is the cell membrane. The protein localises to the cell junction. The protein resides in the cytoplasmic vesicle membrane. In terms of biological role, phosphoinositides-binding protein that induces the formation of planar or gently curved membrane structures. Binds to phosphoinositides, including to phosphatidylinositol 4,5-bisphosphate (PtdIns(4,5)P2) headgroups. There seems to be no clear preference for a specific phosphoinositide. In Bos taurus (Bovine), this protein is BAR/IMD domain-containing adapter protein 2-like 2 (BAIAP2L2).